Consider the following 376-residue polypeptide: 1-acyl-sn-glycerol-3-phosphate acyltransferase gamma (376 aa).

The Cytoplasmic portion of the chain corresponds to 1 to 124 (MGLLAYLKTQ…LGSSKVLAKR (124 aa)). The HXXXXD motif motif lies at 96-101 (HNFEID). Residues 125 to 145 (ELLCVPLIGWTWYFLEIVFCK) traverse the membrane as a helical segment. The Lumenal segment spans residues 146 to 316 (RKWEEDRDTV…TLLNFLCWAT (171 aa)). Residues 317-339 (ILLSPLFSFVLGVFASGSPLLIL) traverse the membrane as a helical segment. Residues 340–376 (TFLGFVGAASFGVRRLIGVTEIEKGSSYGNQELKKKE) are Cytoplasmic-facing.

This sequence belongs to the 1-acyl-sn-glycerol-3-phosphate acyltransferase family. In terms of tissue distribution, widely expressed. Mainly expressed in testis, kidney and liver (at protein level).

It localises to the endoplasmic reticulum membrane. The protein localises to the nucleus envelope. The catalysed reaction is a 1-acyl-sn-glycero-3-phosphate + an acyl-CoA = a 1,2-diacyl-sn-glycero-3-phosphate + CoA. It carries out the reaction pentadecanoyl-CoA + 1-(9Z-octadecenoyl)-sn-glycero-3-phosphate = 1-(9Z)-octadecenoyl-2-pentadecanoyl-sn-glycero-3-phosphate + CoA. The enzyme catalyses heptadecanoyl-CoA + 1-(9Z-octadecenoyl)-sn-glycero-3-phosphate = 1-(9Z)-octadecenoyl-2-heptadecanoyl-sn-glycero-3-phosphate + CoA. It catalyses the reaction 1-(9Z-octadecenoyl)-sn-glycero-3-phosphate + octadecanoyl-CoA = 1-(9Z-octadecenoyl)-2-octadecanoyl-sn-glycero-3-phosphate + CoA. The catalysed reaction is nonadecanoyl-CoA + 1-(9Z-octadecenoyl)-sn-glycero-3-phosphate = 1-(9Z)-octadecenoyl-2-nonadecanoyl-sn-glycero-3-phosphate + CoA. It carries out the reaction 1-(9Z-octadecenoyl)-sn-glycero-3-phosphate + (5Z,8Z,11Z,14Z)-eicosatetraenoyl-CoA = 1-(9Z)-octadecenoyl-2-(5Z,8Z,11Z,14Z)-eicosatetraenoyl-sn-glycero-3-phosphate + CoA. The enzyme catalyses 1-(9Z-octadecenoyl)-sn-glycero-3-phosphate + (9Z)-octadecenoyl-CoA = 1,2-di-(9Z-octadecenoyl)-sn-glycero-3-phosphate + CoA. It catalyses the reaction 1-(9Z-octadecenoyl)-sn-glycero-3-phosphate + (9Z,12Z)-octadecadienoyl-CoA = 1-(9Z)-octadecenoyl-2-(9Z,12Z)-octadecadienoyl-sn-glycero-3-phosphate + CoA. The catalysed reaction is 1-(9Z-octadecenoyl)-sn-glycero-3-phosphocholine + (5Z,8Z,11Z,14Z)-eicosatetraenoyl-CoA = 1-(9Z)-octadecenoyl-2-(5Z,8Z,11Z,14Z)-icosatetraenoyl-sn-glycero-3-phosphocholine + CoA. It carries out the reaction 1-(9Z-octadecenoyl)-sn-glycero-3-phospho-(1D-myo-inositol) + (5Z,8Z,11Z,14Z)-eicosatetraenoyl-CoA = 1-(9Z-octadecenoyl)-2-(5Z,8Z,11Z,14Z-eicosatetraenoyl)-sn-glycero-3-phospho-1D-myo-inositol + CoA. The enzyme catalyses 1-(9Z-octadecenoyl)-sn-glycero-3-phospho-L-serine + (5Z,8Z,11Z,14Z)-eicosatetraenoyl-CoA = 1-(9Z-octadecenoyl)-2-(5Z,8Z,11Z,14Z-eicosatetraenoyl)-sn-glycero-3-phospho-L-serine + CoA. It catalyses the reaction 1-hexadecanoyl-sn-glycero-3-phosphate + (9Z)-octadecenoyl-CoA = 1-hexadecanoyl-2-(9Z-octadecenoyl)-sn-glycero-3-phosphate + CoA. The catalysed reaction is 1-hexadecanoyl-sn-glycero-3-phosphate + (5Z,8Z,11Z,14Z)-eicosatetraenoyl-CoA = 1-hexadecanoyl-2-(5Z,8Z,11Z,14Z-eicosatetraenoyl)-sn-glycero-3-phosphate + CoA. It carries out the reaction 1-heptadecanoyl-sn-glycero-3-phosphate + (5Z,8Z,11Z,14Z)-eicosatetraenoyl-CoA = 1-heptadecanoyl-2-(5Z,8Z,11Z,14Z)-eicosatetraenoyl-sn-glycero-3-phosphate + CoA. The enzyme catalyses 1-octadecanoyl-sn-glycero-3-phosphate + (9Z)-octadecenoyl-CoA = 1-octadecanoyl-2-(9Z-octadecenoyl)-sn-glycero-3-phosphate + CoA. It catalyses the reaction 1-octadecanoyl-sn-glycero-3-phosphate + (5Z,8Z,11Z,14Z)-eicosatetraenoyl-CoA = 1-octadecanoyl-2-(5Z,8Z,11Z,14Z-eicosatetraenoyl)-sn-glycero-3-phosphate + CoA. The catalysed reaction is 1-(9Z-octadecenoyl)-sn-glycero-3-phosphate + hexadecanoyl-CoA = 1-hexadecanoyl-2-(9Z-octadecenoyl)-sn-glycero-3-phosphate + CoA. It carries out the reaction 1-O-(9Z-octadecenyl)-sn-glycero-3-phosphate + (5Z,8Z,11Z,14Z)-eicosatetraenoyl-CoA = 1-O-(9Z-octadecenyl)-2-(5Z,8Z,11Z,14Z-eicosatetraenoyl)-sn-glycero-3-phosphate + CoA. The enzyme catalyses a 1-acyl-sn-glycero-3-phospho-(1D-myo-inositol) + (5Z,8Z,11Z,14Z)-eicosatetraenoyl-CoA = a 1-acyl-2-(5Z,8Z,11Z,14Z-eicosatetraenoyl)-sn-glycero-3-phospho-(1D-myo-inositol) + CoA. Its pathway is phospholipid metabolism; CDP-diacylglycerol biosynthesis; CDP-diacylglycerol from sn-glycerol 3-phosphate: step 2/3. Its activity is regulated as follows. In males, activity increases in an age-dependent fashion, maybe derived from the induction by sex-hormones. Functionally, converts 1-acyl-sn-glycerol-3-phosphate (lysophosphatidic acid or LPA) into 1,2-diacyl-sn-glycerol-3-phosphate (phosphatidic acid or PA) by incorporating an acyl moiety at the sn-2 position of the glycerol backbone. Acts on LPA containing saturated or unsaturated fatty acids C16:0-C20:4 at the sn-1 position using C18:1, C20:4 or C18:2-CoA as the acyl donor. Also acts on lysophosphatidylcholine, lysophosphatidylinositol and lysophosphatidylserine using C18:1 or C20:4-CoA. Has a preference for arachidonoyl-CoA as a donor. Also has a modest lysophosphatidylinositol acyltransferase (LPIAT) activity, converts lysophosphatidylinositol (LPI) into phosphatidylinositol. This is 1-acyl-sn-glycerol-3-phosphate acyltransferase gamma from Mus musculus (Mouse).